The chain runs to 343 residues: Ribosomal RNA small subunit methyltransferase, chloroplastic (343 aa).

The N-terminal 48 residues, 1 to 48 (MMNAVITSATINCNSLSPSWTCGDNSPSKLLLGEISAALSRRRTVKVS), are a transit peptide targeting the chloroplast. S-adenosyl-L-methionine is bound by residues His-78, Met-80, Gly-105, Glu-126, Asp-151, and Asn-183.

It belongs to the class I-like SAM-binding methyltransferase superfamily. rRNA adenine N(6)-methyltransferase family.

The protein resides in the plastid. Its subcellular location is the chloroplast. In terms of biological role, required for methylation of the 3' adenosines in the small subunit of plastid rRNA. Essential for chloroplast biogenesis at low temperatures. The protein is Ribosomal RNA small subunit methyltransferase, chloroplastic of Arabidopsis thaliana (Mouse-ear cress).